Consider the following 256-residue polypeptide: MRNMASLSSSLVLLLAALILSPQVLADYEKPPIYKPPVYTPPVYKPPVEKPPVYKPPVYKPPVEKPPVYKPPVYKPPIYKPPVYKPPVEKPPVYKPPVYKPPVYKPPVYKPPIEKPPVYKPPVYKPPVYKPPVYKPPVYKPPVYKPPVEKPPVYKPPVYKPPVYKPPVYKPPVEKPPVYKPPVYKPPVYKPPVYKPPVEKPPIYKPPVYKPPIEKPPVYKPPVYKPPVYKPPVYKPPVKKPPIYKPPYPKYPPGSN.

The first 26 residues, 1–26, serve as a signal peptide directing secretion; it reads MRNMASLSSSLVLLLAALILSPQVLA. A run of 44 repeats spans residues 31–35, 36–40, 41–45, 46–50, 51–55, 56–60, 61–65, 66–70, 71–75, 76–80, 81–85, 86–90, 91–95, 96–100, 101–105, 106–110, 111–115, 116–120, 121–125, 126–130, 131–135, 136–140, 141–145, 146–150, 151–155, 156–160, 161–165, 166–170, 171–175, 176–180, 181–185, 186–190, 191–195, 196–200, 201–205, 206–210, 211–215, 216–220, 221–225, 226–230, 231–235, 236–240, 241–245, and 246–250. Residues 31–250 are 44 X 5 AA tandem repeats of P-P-[VIY]-[EYKP]-[KT]; the sequence is PPIYKPPVYT…PPIYKPPYPK (220 aa). The segment at 233–256 is disordered; sequence VYKPPVKKPPIYKPPYPKYPPGSN.

It belongs to the plant proline-rich protein superfamily. ENOD12 family.

The protein resides in the secreted. Its subcellular location is the cell wall. In terms of biological role, this is a developmentally regulated putative cell wall protein. In Glycine max (Soybean), this protein is Repetitive proline-rich cell wall protein 1 (PRP1).